Here is a 215-residue protein sequence, read N- to C-terminus: Ras-related protein Rab-14 (215 aa).

N-acetylalanine is present on alanine 2. GTP contacts are provided by glycine 21, valine 22, glycine 23, lysine 24, serine 25, cysteine 26, alanine 38, aspartate 39, cysteine 40, histidine 42, and threonine 43. Mg(2+) is bound at residue serine 25. The short motif at 42 to 47 is the Switch 1 element; that stretch reads HTIGVE. 2 residues coordinate Mg(2+): threonine 43 and aspartate 66. Residues 68–77 carry the Switch 2 motif; the sequence is AGQERFRAVT. Glycine 69, asparagine 124, lysine 125, aspartate 127, alanine 155, and lysine 156 together coordinate GTP. The segment at 188-215 is disordered; that stretch reads SGVQHKPSAPQGGRLTSEPQPQREGCGC. Residues cysteine 213 and cysteine 215 are each lipidated (S-geranylgeranyl cysteine). Cysteine 215 is modified (cysteine methyl ester).

The protein belongs to the small GTPase superfamily. Rab family. Interacts with ZFYVE20. Interacts with KIF16B. Interacts (GTP-bound form) with RUFY1; the interaction recruits RUFY1 onto endosomal membranes. Interacts (GTP-bound form) with RAB11FIP1 (via its C-terminus); the interactions doesn't mediate RAB11FIP1 rectruitment to membranes. Interacts with RAB11FIP2. Mg(2+) is required as a cofactor.

The protein resides in the recycling endosome. It localises to the early endosome membrane. Its subcellular location is the golgi apparatus membrane. It is found in the golgi apparatus. The protein localises to the trans-Golgi network membrane. The protein resides in the cytoplasmic vesicle. It localises to the phagosome. It carries out the reaction GTP + H2O = GDP + phosphate + H(+). Regulated by guanine nucleotide exchange factors (GEFs) including DENND6A and DENND6B which promote the exchange of bound GDP for free GTP. Regulated by GTPase activating proteins (GAPs) which increase the GTP hydrolysis activity. Inhibited by GDP dissociation inhibitors (GDIs) which prevent Rab-GDP dissociation. The small GTPases Rab are key regulators of intracellular membrane trafficking, from the formation of transport vesicles to their fusion with membranes. Rabs cycle between an inactive GDP-bound form and an active GTP-bound form that is able to recruit to membranes different set of downstream effectors directly responsible for vesicle formation, movement, tethering and fusion. Involved in membrane trafficking between the Golgi complex and endosomes during early embryonic development. Regulates the Golgi to endosome transport of FGFR-containing vesicles during early development, a key process for developing basement membrane and epiblast and primitive endoderm lineages during early postimplantation development. May act by modulating the kinesin KIF16B-cargo association to endosomes. Regulates, together with its guanine nucleotide exchange factor DENND6A, the specific endocytic transport of ADAM10, N-cadherin/CDH2 shedding and cell-cell adhesion. Mediates endosomal tethering and fusion through the interaction with RUFY1 and RAB4B. Interaction with RAB11FIP1 may function in the process of neurite formation. The protein is Ras-related protein Rab-14 (RAB14) of Sus scrofa (Pig).